The chain runs to 234 residues: Fibroblast growth factor-binding protein 1 (234 aa).

An N-terminal signal peptide occupies residues 1-23; it reads MRTHGLTLLSLLLLAVPMLLVEA. The segment at 25–59 is disordered; the sequence is KEGRNRRGSKASADESLALGKPGKEPRSQPTNYPI. 3 disulfide bridges follow: C71-C88, C97-C130, and C106-C142. Residue N155 is glycosylated (N-linked (GlcNAc...) asparagine). The segment at 169-200 is disordered; that stretch reads MEPSPMDTVEVTTSSSPEKTQTMATKDPQCEE. O-linked (GalNAc...) serine glycosylation is present at S172. Polar residues predominate over residues 178-192; it reads EVTTSSSPEKTQTMA. The interval 194–234 is sufficient for interaction with FGF2 and FGF2-induced effects; that stretch reads KDPQCEEEDLKNQRKAALEYCGETWGSLCNFFLSMVQGSSC. 2 disulfides stabilise this stretch: C198/C234 and C214/C222.

Belongs to the fibroblast growth factor-binding protein family. In terms of assembly, found in a complex with FGFBP1, FGF1 and FGF2. Interacts with FGF1, FGF7, FGF10, FGF22 and HSPG2. Interacts with FGF2.

Its subcellular location is the secreted. It localises to the extracellular space. The protein localises to the cell membrane. Its function is as follows. Acts as a carrier protein that release fibroblast-binding factors (FGFs) from the extracellular matrix (EM) storage and thus enhance the mitogenic activity of FGFs. Enhances FGF2 signaling during tissue repair, angiogenesis and in tumor growth. In Bos taurus (Bovine), this protein is Fibroblast growth factor-binding protein 1 (FGFBP1).